The primary structure comprises 186 residues: Signal peptidase I P (186 aa).

At 1-15 the chain is on the cytoplasmic side; that stretch reads MTKEKVFKKKSSILE. The helical transmembrane segment at 16 to 35 threads the bilayer; that stretch reads WGKAIVIAVILALLIRNFLF. Residues 36 to 186 lie on the Extracellular side of the membrane; it reads EPYVVEGKSM…FPFSNMRKAK (151 aa). Active-site residues include serine 44 and lysine 86.

This sequence belongs to the peptidase S26 family.

It is found in the cell membrane. The catalysed reaction is Cleavage of hydrophobic, N-terminal signal or leader sequences from secreted and periplasmic proteins.. This chain is Signal peptidase I P (sipP), found in Bacillus subtilis subsp. natto.